Consider the following 756-residue polypeptide: Anaphase-promoting complex subunit 5 (756 aa).

4 TPR repeats span residues R301–S334, D522–N555, I581–Y614, and Y678–R711.

Belongs to the APC5 family. In terms of assembly, the APC/C is composed of at least 12 subunits.

Its subcellular location is the nucleus. The protein localises to the cytoplasm. It is found in the cytoskeleton. The protein resides in the spindle. It participates in protein modification; protein ubiquitination. Component of the anaphase promoting complex/cyclosome (APC/C), a cell cycle-regulated E3 ubiquitin ligase that controls progression through mitosis and the G1 phase of the cell cycle. The APC/C complex acts by mediating ubiquitination and subsequent degradation of target proteins: it mainly mediates the formation of 'Lys-11'-linked polyubiquitin chains and, to a lower extent, the formation of 'Lys-48'- and 'Lys-63'-linked polyubiquitin chains. The APC/C complex catalyzes assembly of branched 'Lys-11'-/'Lys-48'-linked branched ubiquitin chains on target proteins. The polypeptide is Anaphase-promoting complex subunit 5 (ANAPC5) (Gallus gallus (Chicken)).